A 631-amino-acid polypeptide reads, in one-letter code: E3 ubiquitin-protein ligase Zswim2 (631 aa).

The segment at 54–87 (FRVLLGNPHECSCPTFLKRGELCKHICWVLLKKF) adopts an SWIM-type zinc-finger fold. Residues 139–348 (KDINAGDICP…APGYQCRLCL (210 aa)) form a UBE2D1-binding region. Residues 147–199 (CPICQEVLLEKKLPVTFCRFGCGNNVHIKCMRILANYQDTGSDSSVLRCPLCR) form an RING-type 1 zinc finger. The segment at 230 to 281 (HLGIPCNNCNQLPIEGRCYKCTECVEYHLCQECFDSCCHSSHAFASREKRNQ) adopts a ZZ-type zinc-finger fold. Zn(2+) contacts are provided by Cys-235, Cys-238, Cys-250, Cys-253, Cys-259, Cys-262, His-268, and His-271. An RING-type 2 zinc finger spans residues 344–386 (CRLCLKSFSFGQYTRLLPCTHKFHRKCIDNWLLHKCNSCPIDR). The tract at residues 589-614 (SKRQNNSMGKVRQKLGHPPRRPAYPP) is disordered. Basic residues predominate over residues 599-608 (VRQKLGHPPR).

Dimer. Interacts with UBE2D1. Polyubiquitinated. Polyubiquitination is followed by degradation via the proteasome. In terms of tissue distribution, expressed only in testis.

It catalyses the reaction S-ubiquitinyl-[E2 ubiquitin-conjugating enzyme]-L-cysteine + [acceptor protein]-L-lysine = [E2 ubiquitin-conjugating enzyme]-L-cysteine + N(6)-ubiquitinyl-[acceptor protein]-L-lysine.. Its function is as follows. E3 ubiquitin-protein ligase involved in the regulation of Fas-, DR3- and DR4-mediated apoptosis. Functions in conjunction with the UBE2D1, UBE2D3 and UBE2E1 E2 ubiquitin-conjugating enzymes. In Mus musculus (Mouse), this protein is E3 ubiquitin-protein ligase Zswim2 (Zswim2).